The chain runs to 335 residues: Protein-lysine N-methyltransferase EEF2KMT (335 aa).

The residue at position 1 (M1) is an N-acetylmethionine. S-adenosyl-L-methionine-binding positions include W139, 165–167 (GSG), W228, and A247.

Belongs to the class I-like SAM-binding methyltransferase superfamily. EEF2KMT family. As to quaternary structure, interacts with FAM86B2 and FAM86C1P.

It localises to the cytoplasm. It carries out the reaction L-lysyl-[protein] + 3 S-adenosyl-L-methionine = N(6),N(6),N(6)-trimethyl-L-lysyl-[protein] + 3 S-adenosyl-L-homocysteine + 3 H(+). Its function is as follows. Catalyzes the trimethylation of eukaryotic elongation factor 2 (EEF2) on 'Lys-525'. This Mus musculus (Mouse) protein is Protein-lysine N-methyltransferase EEF2KMT (Eef2kmt).